A 459-amino-acid chain; its full sequence is MLLLRRYSGGSLYSILPIRASIESTIRHFNSLEPLQSSDSTPTKGDYFAAINHVVNIVRREIHPERSLNSLRLPVTSEFVFRVLRATSRSSNDSLRFFNWARSNPSYTPTSMEYEELAKSLASHKKYESMWKILKQMKDLSLDISGETLCFIIEQYGKNGHVDQAVELFNGVPKTLGCQQTVDVYNSLLHALCDVKMFHGAYALIRRMIRKGLKPDKRTYAILVNGWCSAGKMKEAQEFLDEMSRRGFNPPARGRDLLIEGLLNAGYLESAKEMVSKMTKGGFVPDIQTFNILIEAISKSGEVEFCIEMYYTACKLGLCVDIDTYKTLIPAVSKIGKIDEAFRLLNNCVEDGHKPFPSLYAPIIKGMCRNGMFDDAFSFFSDMKVKAHPPNRPVYTMLITMCGRGGKFVDAANYLVEMTEMGLVPISRCFDMVTDGLKNGGKHDLAMRIEQLEVQLRGV.

A mitochondrion-targeting transit peptide spans 1–7 (MLLLRRY). PPR repeat units lie at residues 110-144 (TSME…SLDI), 145-175 (SGET…VPKT), 181-215 (TVDV…GLKP), 216-250 (DKRT…GFNP), 251-285 (PARG…GFVP), 286-320 (DIQT…GLCV), 321-355 (DIDT…GHKP), 356-390 (FPSL…AHPP), and 391-425 (NRPV…GLVP).

Belongs to the PPR family. P subfamily.

It localises to the mitochondrion. This chain is Pentatricopeptide repeat-containing protein At5g18390, mitochondrial, found in Arabidopsis thaliana (Mouse-ear cress).